Here is a 379-residue protein sequence, read N- to C-terminus: Probable RNA 3'-terminal phosphate cyclase-like protein (379 aa).

This sequence belongs to the RNA 3'-terminal cyclase family. Type 2 subfamily. As to quaternary structure, part of the small subunit (SSU) processome, composed of more than 70 proteins and the RNA chaperone small nucleolar RNA (snoRNA) U3.

The protein resides in the nucleus. The protein localises to the nucleolus. Its function is as follows. Part of the small subunit (SSU) processome, first precursor of the small eukaryotic ribosomal subunit. During the assembly of the SSU processome in the nucleolus, many ribosome biogenesis factors, an RNA chaperone and ribosomal proteins associate with the nascent pre-rRNA and work in concert to generate RNA folding, modifications, rearrangements and cleavage as well as targeted degradation of pre-ribosomal RNA by the RNA exosome. Does not have cyclase activity. The protein is Probable RNA 3'-terminal phosphate cyclase-like protein of Caenorhabditis elegans.